Consider the following 660-residue polypeptide: Bifunctional polymyxin resistance protein ArnA (660 aa).

Positions 1-304 (MKTVVFAYHD…TLGLVQGSRL (304 aa)) are formyltransferase ArnAFT. Residue 86–88 (HLI) coordinates (6R)-10-formyltetrahydrofolate. Residue histidine 104 is the Proton donor; for formyltransferase activity of the active site. Residues arginine 114 and 136 to 140 (VTRAD) contribute to the (6R)-10-formyltetrahydrofolate site. Positions 314–660 (RRTRVLILGV…RTVDLTDKPS (347 aa)) are dehydrogenase ArnADH. Residues aspartate 347 and 368–369 (DI) each bind NAD(+). Residues alanine 393, tyrosine 398, and 432–433 (TS) each bind UDP-alpha-D-glucuronate. Glutamate 434 (proton acceptor; for decarboxylase activity) is an active-site residue. UDP-alpha-D-glucuronate is bound by residues arginine 460, asparagine 492, 526–535 (KLIDGGKQKR), and tyrosine 613. Arginine 619 (proton donor; for decarboxylase activity) is an active-site residue.

In the N-terminal section; belongs to the Fmt family. UDP-L-Ara4N formyltransferase subfamily. It in the C-terminal section; belongs to the NAD(P)-dependent epimerase/dehydratase family. UDP-glucuronic acid decarboxylase subfamily. As to quaternary structure, homohexamer, formed by a dimer of trimers.

The enzyme catalyses UDP-alpha-D-glucuronate + NAD(+) = UDP-beta-L-threo-pentopyranos-4-ulose + CO2 + NADH. It catalyses the reaction UDP-4-amino-4-deoxy-beta-L-arabinose + (6R)-10-formyltetrahydrofolate = UDP-4-deoxy-4-formamido-beta-L-arabinose + (6S)-5,6,7,8-tetrahydrofolate + H(+). It functions in the pathway nucleotide-sugar biosynthesis; UDP-4-deoxy-4-formamido-beta-L-arabinose biosynthesis; UDP-4-deoxy-4-formamido-beta-L-arabinose from UDP-alpha-D-glucuronate: step 1/3. It participates in nucleotide-sugar biosynthesis; UDP-4-deoxy-4-formamido-beta-L-arabinose biosynthesis; UDP-4-deoxy-4-formamido-beta-L-arabinose from UDP-alpha-D-glucuronate: step 3/3. The protein operates within bacterial outer membrane biogenesis; lipopolysaccharide biosynthesis. Bifunctional enzyme that catalyzes the oxidative decarboxylation of UDP-glucuronic acid (UDP-GlcUA) to UDP-4-keto-arabinose (UDP-Ara4O) and the addition of a formyl group to UDP-4-amino-4-deoxy-L-arabinose (UDP-L-Ara4N) to form UDP-L-4-formamido-arabinose (UDP-L-Ara4FN). The modified arabinose is attached to lipid A and is required for resistance to polymyxin and cationic antimicrobial peptides. This chain is Bifunctional polymyxin resistance protein ArnA, found in Shigella dysenteriae serotype 1 (strain Sd197).